The following is a 186-amino-acid chain: Hydra actinoporin-like toxin 1 (186 aa).

Positions 1 to 18 (MLLYICLVNLLLPLSVGA) are cleaved as a signal peptide. The tract at residues 29–48 (KVGVDAALQQIDDVWKGKTV) is N-terminal region. The Cell attachment site, crucial for protein stability motif lies at 158–160 (RAG).

It belongs to the actinoporin family. HALT subfamily. In terms of assembly, octamer or nonamer in membranes. Monomer in the soluble state. In vitro, interacts with folate receptor alpha (of target organism). As to expression, expressed female germline during oogenesis.

It localises to the nematocyst. The protein localises to the secreted. The protein resides in the target cell membrane. In terms of biological role, pore-forming protein that forms hydrophilic pores and causes cytolysis. Compared to equinatoxin-2 (AC P61914), it reveals lower cytolysis activity (5-12-fold difference, tested on erythrocytes), a larger pore size (probably 2-3 nm) and different affinity to membrane lipids (100-fold lower affinity to sphingomyelin). Binds to sulfatides (SFT) as well as to the two sphingolipids, lysophosphatidic acid (LPA) and sphingosine-1-phosphate (S1P). It seems to bind more strongly to LPA than to S1P and SFT. Shows cytolytic activity on HeLa cells, with a different potency than its paralogs (from most potent to less potent: HALT-4&gt;HALT-6~HALT-1&gt;HALT-3&gt;HALT-7&gt;HALT-2). Pore formation is a multi-step process that involves specific recognition of membrane lipid by a protein aromatic residues rich region, firm binding to the membrane (mainly driven by hydrophobic interactions) accompanied by the transfer of the N-terminal region to the lipid-water interface and finally pore formation after oligomerization of monomers. In vitro, binds to the folate receptor alpha (FOLR1), a GPI-anchored membrane protein that plays a major role in the uptake of folate/folic acid into cells via endocytosis, suggesting a possible involvement of this receptor in the mechanism of HALT-1-induced cell lysis. In vivo, does not cause visible paralysis in larvae of the blowfly Sarcophaga faculata, the most common arthropod prey of Hydra. The polypeptide is Hydra actinoporin-like toxin 1 (Hydra vulgaris (Hydra)).